A 292-amino-acid chain; its full sequence is Formamidopyrimidine-DNA glycosylase (292 aa).

P2 acts as the Schiff-base intermediate with DNA in catalysis. E3 functions as the Proton donor in the catalytic mechanism. K60 functions as the Proton donor; for beta-elimination activity in the catalytic mechanism. DNA-binding residues include H109, R128, and R173. The FPG-type zinc finger occupies 258–292 (NVYRRTGRECRKCGNLIERQKITGRSTHWCPNCQK). R282 (proton donor; for delta-elimination activity) is an active-site residue.

It belongs to the FPG family. In terms of assembly, monomer. Requires Zn(2+) as cofactor.

The enzyme catalyses Hydrolysis of DNA containing ring-opened 7-methylguanine residues, releasing 2,6-diamino-4-hydroxy-5-(N-methyl)formamidopyrimidine.. It catalyses the reaction 2'-deoxyribonucleotide-(2'-deoxyribose 5'-phosphate)-2'-deoxyribonucleotide-DNA = a 3'-end 2'-deoxyribonucleotide-(2,3-dehydro-2,3-deoxyribose 5'-phosphate)-DNA + a 5'-end 5'-phospho-2'-deoxyribonucleoside-DNA + H(+). Its function is as follows. Involved in base excision repair of DNA damaged by oxidation or by mutagenic agents. Acts as a DNA glycosylase that recognizes and removes damaged bases. Has a preference for oxidized purines, such as 7,8-dihydro-8-oxoguanine (8-oxoG). Has AP (apurinic/apyrimidinic) lyase activity and introduces nicks in the DNA strand. Cleaves the DNA backbone by beta-delta elimination to generate a single-strand break at the site of the removed base with both 3'- and 5'-phosphates. This chain is Formamidopyrimidine-DNA glycosylase, found in Prochlorococcus marinus (strain MIT 9301).